Here is a 94-residue protein sequence, read N- to C-terminus: Small ribosomal subunit protein bS18 (94 aa).

The protein belongs to the bacterial ribosomal protein bS18 family. In terms of assembly, part of the 30S ribosomal subunit. Forms a tight heterodimer with protein bS6.

Binds as a heterodimer with protein bS6 to the central domain of the 16S rRNA, where it helps stabilize the platform of the 30S subunit. The chain is Small ribosomal subunit protein bS18 from Polaromonas sp. (strain JS666 / ATCC BAA-500).